A 64-amino-acid chain; its full sequence is Beta-defensin 1 (64 aa).

The signal sequence occupies residues 1–20 (MRLHHLLLVLFFLVLSAGSG). Positions 21 to 26 (FTQGIR) are excised as a propeptide. 3 cysteine pairs are disulfide-bonded: Cys-31–Cys-60, Cys-38–Cys-53, and Cys-43–Cys-61.

This sequence belongs to the beta-defensin family. In terms of assembly, monomer. Homodimer.

The protein resides in the secreted. It is found in the membrane. Has bactericidal activity. May act as a ligand for C-C chemokine receptor CCR6. Positively regulates the sperm motility and bactericidal activity in a CCR6-dependent manner. Binds to CCR6 and triggers Ca2+ mobilization in the sperm which is important for its motility. The sequence is that of Beta-defensin 1 (DEFB1) from Capra hircus (Goat).